We begin with the raw amino-acid sequence, 44 residues long: Protein PsbN (44 aa).

The chain crosses the membrane as a helical span at residues 6–26 (FFFTLFLWFFLLSITIYSIYI).

Belongs to the PsbN family.

Its subcellular location is the plastid. The protein resides in the chloroplast thylakoid membrane. Its function is as follows. May play a role in photosystem I and II biogenesis. The sequence is that of Protein PsbN from Oedogonium cardiacum (Filamentous green alga).